The sequence spans 377 residues: Interferon gamma receptor 1 (377 aa).

The signal sequence occupies residues 1 to 23 (MRTQIYISVTVLILLLKKSDLEA). Residues 24–235 (VRVPSPESVS…IRRYTPFTVY (212 aa)) are Extracellular-facing. In terms of domain architecture, Fibronectin type-III spans 26–117 (VPSPESVSVQ…DFFIFSFNEN (92 aa)). N-linked (GlcNAc...) asparagine glycosylation is found at N78 and N186. Residues 236–256 (LYPVLGVTLTLLFITGIIILL) form a helical membrane-spanning segment. The Cytoplasmic portion of the chain corresponds to 257-377 (EKKCNSEMKK…TVDSYGPRLL (121 aa)). The disordered stretch occupies residues 326–377 (VYSEDKNSYGPNDLVEDEQSDLSDFYDCPHAPKQKREMSPGDTVDSYGPRLL).

The protein belongs to the type II cytokine receptor family. Highly expressed in spleen. Also detected in brain, kidney, gill, intestine and heart. Expressed at very low levels in muscle. In immune cell populations, shows highest expression in monocytes, and slightly lower expression in peripheral blood leukocytes, splenocytes, neutrophils and mature macrophages.

It localises to the cell membrane. In terms of biological role, receptor which shows binding specificity for the cytokine ifng1r (interferon gamma-related). The polypeptide is Interferon gamma receptor 1 (Carassius auratus (Goldfish)).